A 233-amino-acid polypeptide reads, in one-letter code: 7-cyano-7-deazaguanine synthase 2 (233 aa).

ATP is bound at residue 8–18 (LSGGLDSTTCM). Positions 186, 194, 197, and 200 each coordinate Zn(2+).

The protein belongs to the QueC family. As to quaternary structure, homodimer. The cofactor is Zn(2+).

The catalysed reaction is 7-carboxy-7-deazaguanine + NH4(+) + ATP = 7-cyano-7-deazaguanine + ADP + phosphate + H2O + H(+). Its pathway is purine metabolism; 7-cyano-7-deazaguanine biosynthesis. In terms of biological role, catalyzes the ATP-dependent conversion of 7-carboxy-7-deazaguanine (CDG) to 7-cyano-7-deazaguanine (preQ(0)). The protein is 7-cyano-7-deazaguanine synthase 2 of Desulfitobacterium hafniense (strain Y51).